We begin with the raw amino-acid sequence, 263 residues long: MARFLGLCTWLLALGPGLLATVRAECSQDCATCSYRLARPTDLNPLACTLECEGKLPSLKTWETCKELLQLTKLELPPDATSALSKQEESHLLAKKYGGFMKRYGGFMKKMDELYPLEVEEEANGGEVLGKRYGGFMKKDAEEDDGLGNSSNLLKELLGAGDQREGSLHQEGSDAEDVSKRYGGFMRGLKRSPHLEDETKELQKRYGGFMRRVGRPEWWMDYQKRYGGFLKRFAEPLPSEEEGESYSKEVPEMEKRYGGFMRF.

Positions 1–24 (MARFLGLCTWLLALGPGLLATVRA) are cleaved as a signal peptide. Disulfide bonds link C26–C48, C30–C52, and C33–C65. 2 propeptides span residues 192–203 (SPHLEDETKELQ) and 213–223 (VGRPEWWMDYQ). At S247 the chain carries Phosphoserine.

It belongs to the opioid neuropeptide precursor family. Proenkephalin-A is cleaved by CTSL to generate Met-enkephalin. Post-translationally, processed and degraded by ACE. In terms of processing, probably cleaved by ACE. Processed by ACE to generate Met-enkephalin in the nucleus accumbens of the brain. Post-translationally, the N-terminal domain contains 6 conserved cysteines thought to be involved in disulfide bonding and/or processing. As to expression, secreted by neuroendocrine chromaffin cells through cromaffin granules.

It is found in the cytoplasmic vesicle. It localises to the secretory vesicle. The protein localises to the chromaffin granule lumen. The protein resides in the secreted. Functionally, neuropeptide that competes with and mimic the effects of opiate drugs. They play a role in a number of physiologic functions, including pain perception and responses to stress. Met-enkephalin-Arg-Phe neuropeptide acts as a strong ligand of Mu-type opioid receptor OPRM1. Met-enkephalin-Arg-Phe-binding to OPRM1 in the nucleus accumbens of the brain increases activation of OPRM1, leading to long-term synaptic depression of glutamate release. Its function is as follows. Increases glutamate release in the striatum and decreases GABA concentration in the striatum. In terms of biological role, increases glutamate release in the striatum. Functionally, enkelytin possesses antibacterial activity against Gram-positive bacteria such as Micrococcus luteus and Bacillus megaterium. The chain is Proenkephalin-A (PENK) from Bos taurus (Bovine).